A 412-amino-acid polypeptide reads, in one-letter code: MKTLDDLETQLGGFAGRRVLVRSDLNVPLDHDRRDGAGQPVITDDGRLRASVPTLRRLLDAGARVVVTAHLGRPKGAPEAKYSLAPVHARLAELLPGVEVGFCPVTVGAQATAAVDALADGELLLLENIRFNAGETSKDDEEREAFADELAALADAFVSDGFGAVHRKHASVYDVALRLPHAAGGLVATEVEVLQRLTAHPERPYAVVLGGSKVSDKLGVIDNLLGSLLGEGDRLLVGGGMVFTFLKAQGYEVGKSLLETDQLDRVAGYVRTAREKGVELVLPTDVVAATAFAADAEHDVVAVDAIPADRLGLDIGPDSGAAFAARLADARTVFWNGPMGVFEMEPYSHGTRAVAQALVDGGAFSVVGGGDSAAAVRTLGFADERFGHISTGGGASLEYLEGKHLPGLDVLS.

Residues 24–26, Arg47, 70–73, Arg130, and Arg167 contribute to the substrate site; these read DLN and HLGR. ATP-binding positions include Lys217, Gly312, Glu343, and 369–372; that span reads GGDS.

This sequence belongs to the phosphoglycerate kinase family. In terms of assembly, monomer.

It localises to the cytoplasm. It carries out the reaction (2R)-3-phosphoglycerate + ATP = (2R)-3-phospho-glyceroyl phosphate + ADP. It participates in carbohydrate degradation; glycolysis; pyruvate from D-glyceraldehyde 3-phosphate: step 2/5. The chain is Phosphoglycerate kinase from Kineococcus radiotolerans (strain ATCC BAA-149 / DSM 14245 / SRS30216).